Here is a 247-residue protein sequence, read N- to C-terminus: Carboxy-S-adenosyl-L-methionine synthase (247 aa).

S-adenosyl-L-methionine contacts are provided by residues tyrosine 39, glycine 64–serine 66, aspartate 89–asparagine 90, aspartate 117–isoleucine 118, asparagine 132, and arginine 199.

Belongs to the class I-like SAM-binding methyltransferase superfamily. Cx-SAM synthase family. As to quaternary structure, homodimer.

The catalysed reaction is prephenate + S-adenosyl-L-methionine = carboxy-S-adenosyl-L-methionine + 3-phenylpyruvate + H2O. Catalyzes the conversion of S-adenosyl-L-methionine (SAM) to carboxy-S-adenosyl-L-methionine (Cx-SAM). The chain is Carboxy-S-adenosyl-L-methionine synthase from Klebsiella pneumoniae (strain 342).